The primary structure comprises 310 residues: Homoserine kinase (310 aa).

Position 91–101 (91–101) interacts with ATP; that stretch reads PIGSGLGSSAC.

This sequence belongs to the GHMP kinase family. Homoserine kinase subfamily.

It localises to the cytoplasm. It carries out the reaction L-homoserine + ATP = O-phospho-L-homoserine + ADP + H(+). The protein operates within amino-acid biosynthesis; L-threonine biosynthesis; L-threonine from L-aspartate: step 4/5. Catalyzes the ATP-dependent phosphorylation of L-homoserine to L-homoserine phosphate. The protein is Homoserine kinase of Shigella flexneri serotype 5b (strain 8401).